The sequence spans 183 residues: ATP-dependent protease subunit HslV (183 aa).

Residue Thr2 is part of the active site. Na(+) contacts are provided by Gly157, Cys160, and Thr163.

It belongs to the peptidase T1B family. HslV subfamily. In terms of assembly, a double ring-shaped homohexamer of HslV is capped on each side by a ring-shaped HslU homohexamer. The assembly of the HslU/HslV complex is dependent on binding of ATP.

The protein localises to the cytoplasm. It carries out the reaction ATP-dependent cleavage of peptide bonds with broad specificity.. Allosterically activated by HslU binding. Its function is as follows. Protease subunit of a proteasome-like degradation complex believed to be a general protein degrading machinery. This chain is ATP-dependent protease subunit HslV, found in Vibrio parahaemolyticus serotype O3:K6 (strain RIMD 2210633).